A 187-amino-acid polypeptide reads, in one-letter code: Segregation and condensation protein B (187 aa).

It belongs to the ScpB family. Homodimer. Homodimerization may be required to stabilize the binding of ScpA to the Smc head domains. Component of a cohesin-like complex composed of ScpA, ScpB and the Smc homodimer, in which ScpA and ScpB bind to the head domain of Smc. The presence of the three proteins is required for the association of the complex with DNA.

The protein localises to the cytoplasm. Functionally, participates in chromosomal partition during cell division. May act via the formation of a condensin-like complex containing Smc and ScpA that pull DNA away from mid-cell into both cell halves. The protein is Segregation and condensation protein B of Agathobacter rectalis (strain ATCC 33656 / DSM 3377 / JCM 17463 / KCTC 5835 / VPI 0990) (Eubacterium rectale).